A 736-amino-acid polypeptide reads, in one-letter code: MKHDHHQGHTHSGKGHACHHEHNSPKTQQASSKMEGPIVYTCPMHPEIRQSAPGHCPLCGMALEPETVTVSEVVSPEYLDMRRRFWIALMLTIPVVILEMGGHGLKHFISGNGSSWIQLLLATPVVLWGGWPFFKRGWQSLKTGQLNMFTLIAMGIGVAWIYSMVAVLWPGVFPHAFRSQEGVVAVYFEAAAVITTLVLLGQVLELKAREQTGSAIRALLKLVPESAHRIKEDGSEEEVSLDNVAVGDLLRVRPGEKIPVDGEVQEGRSFVDESMVTGEPIPVAKEASAKVIGATINQTGSFVMKALHVGSDTMLARIVQMVSDAQRSRAPIQRLADTVSGWFVPAVILVAVLSFIVWALLGPQPALSYGLIAAVSVLIIACPCALGLATPMSIMVGVGKGAQSGVLIKNAEALERMEKVNTLVVDKTGTLTEGHPKLTRIVTDDFVEDNALALAAALEHQSEHPLANAIVHAAKEKGLSLGSVEAFEAPTGKGVVGQVDGHHVAIGNARLMQEHGGDNAPLFEKADELRGKGASVMFMAVDGKTVALLVVEDPIKSSTPETILELQQSGIEIVMLTGDSKRTAEAVAGTLGIKKVVAEIMPEDKSRIVSELKDKGLIVAMAGDGVNDAPALAKADIGIAMGTGTDVAIESAGVTLLHGDLRGIAKARRLSESTMSNIRQNLFFAFIYNVLGVPLAAGVLYPLTGLLLSPMIAAAAMALSSVSVIINALRLKRVTL.

A compositionally biased stretch (basic residues) spans 1 to 17 (MKHDHHQGHTHSGKGHA). The segment at 1–32 (MKHDHHQGHTHSGKGHACHHEHNSPKTQQASS) is disordered. 6 helical membrane-spanning segments follow: residues 85–105 (FWIALMLTIPVVILEMGGHGL), 114–134 (SSWIQLLLATPVVLWGGWPFF), 149–169 (FTLIAMGIGVAWIYSMVAVLW), 183–203 (VVAVYFEAAAVITTLVLLGQV), 341–361 (GWFVPAVILVAVLSFIVWALL), and 369–389 (YGLIAAVSVLIIACPCALGLA). The active-site 4-aspartylphosphate intermediate is D426. 3 residues coordinate Mg(2+): D426, T428, and D624. 2 helical membrane-spanning segments follow: residues 682–702 (LFFAFIYNVLGVPLAAGVLYP) and 706–726 (LLLSPMIAAAAMALSSVSVII).

The protein belongs to the cation transport ATPase (P-type) (TC 3.A.3) family. Type IB subfamily. The cofactor is Mg(2+).

Its subcellular location is the cell inner membrane. The enzyme catalyses Cu(+)(in) + ATP + H2O = Cu(+)(out) + ADP + phosphate + H(+). With respect to regulation, activated by phospholipids, Mg(2+) and Cu(+). In terms of biological role, couples the hydrolysis of ATP with the export of copper. The polypeptide is Copper-exporting P-type ATPase (Legionella pneumophila subsp. pneumophila (strain Philadelphia 1 / ATCC 33152 / DSM 7513)).